Here is a 225-residue protein sequence, read N- to C-terminus: MDLLPSRYKIHKTKLRWILTMMTMMMMMVMRRGESMRLDMESGNTKCISDDIKTNYMTVGTYSIVNPNEGHHLPPSHKLFVTVSSPKGKSHHHAENVESGKFVFTAEETGDYMTCFVAPGYRPTAKFAVDFEWKSGVEAKDWTTIAKRGQITMLEVEVRKLLDVTETIHEEMFQLIEREREMQELNRSTNSRMAALSLLSFVVTMSVAGLQLRHLKSFLERKKLL.

Residues 1-35 form the signal peptide; it reads MDLLPSRYKIHKTKLRWILTMMTMMMMMVMRRGES. The Lumenal portion of the chain corresponds to 36–193; that stretch reads MRLDMESGNT…ELNRSTNSRM (158 aa). The GOLD domain occupies 45-160; that stretch reads TKCISDDIKT…ITMLEVEVRK (116 aa). Positions 175 to 188 form a coiled coil; sequence LIEREREMQELNRS. Omega-N-methylated arginine is present on Arg-178. The N-linked (GlcNAc...) asparagine glycan is linked to Asn-186. A helical transmembrane segment spans residues 194–210; it reads AALSLLSFVVTMSVAGL. The Cytoplasmic segment spans residues 211-225; it reads QLRHLKSFLERKKLL. The short motif at 218-219 is the COPII vesicle coat-binding element; the sequence is FL. Positions 218 to 225 match the COPI vesicle coat-binding motif; the sequence is FLERKKLL.

This sequence belongs to the EMP24/GP25L family. In terms of assembly, probably oligomerizes with other members of the EMP24/GP25L family. Associates with the COPI vesicle coat (coatomer). Associates with the COPII vesicle coat (coatomer).

The protein localises to the endoplasmic reticulum membrane. It localises to the golgi apparatus. Its subcellular location is the cis-Golgi network membrane. The protein resides in the golgi stack membrane. In terms of biological role, involved in vesicular protein trafficking. Mainly functions in the early secretory pathway. Thought to act as cargo receptor at the lumenal side for incorporation of secretory cargo molecules into transport vesicles and to be involved in vesicle coat formation at the cytoplasmic side. In Arabidopsis thaliana (Mouse-ear cress), this protein is Transmembrane emp24 domain-containing protein p24delta11.